Consider the following 357-residue polypeptide: Peptide chain release factor 1 (357 aa).

N5-methylglutamine is present on Gln236. The span at 283–309 (ERRKKDQERANNRREQIGSGDRSERIR) shows a compositional bias: basic and acidic residues. The disordered stretch occupies residues 283-313 (ERRKKDQERANNRREQIGSGDRSERIRTYNF).

Belongs to the prokaryotic/mitochondrial release factor family. In terms of processing, methylated by PrmC. Methylation increases the termination efficiency of RF1.

It localises to the cytoplasm. Its function is as follows. Peptide chain release factor 1 directs the termination of translation in response to the peptide chain termination codons UAG and UAA. The polypeptide is Peptide chain release factor 1 (Rickettsia bellii (strain OSU 85-389)).